The primary structure comprises 147 residues: D-aminoacyl-tRNA deacylase (147 aa).

Positions Gly136–Pro137 match the Gly-cisPro motif, important for rejection of L-amino acids motif.

It belongs to the DTD family. As to quaternary structure, homodimer.

It localises to the cytoplasm. The catalysed reaction is glycyl-tRNA(Ala) + H2O = tRNA(Ala) + glycine + H(+). It catalyses the reaction a D-aminoacyl-tRNA + H2O = a tRNA + a D-alpha-amino acid + H(+). In terms of biological role, an aminoacyl-tRNA editing enzyme that deacylates mischarged D-aminoacyl-tRNAs. Also deacylates mischarged glycyl-tRNA(Ala), protecting cells against glycine mischarging by AlaRS. Acts via tRNA-based rather than protein-based catalysis; rejects L-amino acids rather than detecting D-amino acids in the active site. By recycling D-aminoacyl-tRNA to D-amino acids and free tRNA molecules, this enzyme counteracts the toxicity associated with the formation of D-aminoacyl-tRNA entities in vivo and helps enforce protein L-homochirality. The sequence is that of D-aminoacyl-tRNA deacylase from Streptococcus pneumoniae (strain P1031).